Consider the following 141-residue polypeptide: Large ribosomal subunit protein uL11 (141 aa).

Belongs to the universal ribosomal protein uL11 family. As to quaternary structure, part of the ribosomal stalk of the 50S ribosomal subunit. Interacts with L10 and the large rRNA to form the base of the stalk. L10 forms an elongated spine to which L12 dimers bind in a sequential fashion forming a multimeric L10(L12)X complex. In terms of processing, one or more lysine residues are methylated.

Functionally, forms part of the ribosomal stalk which helps the ribosome interact with GTP-bound translation factors. This chain is Large ribosomal subunit protein uL11, found in Campylobacter lari (strain RM2100 / D67 / ATCC BAA-1060).